The chain runs to 219 residues: Histone H1.4 (219 aa).

A compositionally biased stretch (low complexity) spans 1–15 (MSETAPAAPAAPAPA). A disordered region spans residues 1 to 41 (MSETAPAAPAAPAPAEKTPVKKKARKAAGGAKRKTSGPPVS). S2 is subject to N-acetylserine. A Phosphoserine modification is found at S2. Residue K17 is modified to N6-acetyllysine. T18 is subject to Phosphothreonine. The segment covering 20 to 35 (VKKKARKAAGGAKRKT) has biased composition (basic residues). N6-acetyllysine; alternate is present on K26. K26 carries the post-translational modification N6-methyllysine; alternate. K34 carries the post-translational modification N6-(beta-hydroxybutyryl)lysine; alternate. K34 carries the post-translational modification N6-succinyllysine; alternate. S36 is subject to Phosphoserine. Residues 36–109 (SGPPVSELIT…GASGSFKLNK (74 aa)) enclose the H15 domain. K52 carries the N6-(beta-hydroxybutyryl)lysine modification. R54 is subject to Citrulline. An N6-(beta-hydroxybutyryl)lysine mark is found at K64, K85, K90, and K106. Residues 92-219 (TLVQTKGTGA…KPKKTAAKKK (128 aa)) form a disordered region. A compositionally biased stretch (basic residues) spans 119-140 (KAKRAGAAKAKKPAGAAKKPKK). T146 carries the post-translational modification Phosphothreonine. 2 stretches are compositionally biased toward basic residues: residues 149 to 160 (KSTKKTPKKAKK) and 168 to 185 (KKAK…KKAP). At S150 the chain carries ADP-ribosylserine. At S187 the chain carries Phosphoserine. Residues 192 to 219 (KTVKPKAAKPKTSKPKAAKPKKTAAKKK) are compositionally biased toward basic residues.

The protein belongs to the histone H1/H5 family. In terms of processing, citrullination at Arg-54 (H1R54ci) by PADI4 takes place within the DNA-binding site of H1 and results in its displacement from chromatin and global chromatin decondensation, thereby promoting pluripotency and stem cell maintenance. ADP-ribosylated on Ser-55, Ser-113 and Ser-150 in response to DNA damage. Post-translationally, H1 histones are progressively phosphorylated during the cell cycle, becoming maximally phosphorylated during late G2 phase and M phase, and being dephosphorylated sharply thereafter. In terms of processing, acetylated at Lys-26. Deacetylated at Lys-26 by SIRT1. Hydroxybutyrylation of histones is induced by starvation.

It localises to the nucleus. It is found in the chromosome. In terms of biological role, histone H1 protein binds to linker DNA between nucleosomes forming the macromolecular structure known as the chromatin fiber. Histones H1 are necessary for the condensation of nucleosome chains into higher-order structured fibers. Also acts as a regulator of individual gene transcription through chromatin remodeling, nucleosome spacing and DNA methylation. The chain is Histone H1.4 from Mus musculus (Mouse).